The sequence spans 97 residues: Aspartyl/glutamyl-tRNA(Asn/Gln) amidotransferase subunit C (97 aa).

Belongs to the GatC family. In terms of assembly, heterotrimer of A, B and C subunits.

It catalyses the reaction L-glutamyl-tRNA(Gln) + L-glutamine + ATP + H2O = L-glutaminyl-tRNA(Gln) + L-glutamate + ADP + phosphate + H(+). The catalysed reaction is L-aspartyl-tRNA(Asn) + L-glutamine + ATP + H2O = L-asparaginyl-tRNA(Asn) + L-glutamate + ADP + phosphate + 2 H(+). Allows the formation of correctly charged Asn-tRNA(Asn) or Gln-tRNA(Gln) through the transamidation of misacylated Asp-tRNA(Asn) or Glu-tRNA(Gln) in organisms which lack either or both of asparaginyl-tRNA or glutaminyl-tRNA synthetases. The reaction takes place in the presence of glutamine and ATP through an activated phospho-Asp-tRNA(Asn) or phospho-Glu-tRNA(Gln). The protein is Aspartyl/glutamyl-tRNA(Asn/Gln) amidotransferase subunit C of Thermosynechococcus vestitus (strain NIES-2133 / IAM M-273 / BP-1).